A 37-amino-acid chain; its full sequence is Large ribosomal subunit protein bL36 (37 aa).

The protein belongs to the bacterial ribosomal protein bL36 family.

This chain is Large ribosomal subunit protein bL36, found in Thermobifida fusca (strain YX).